Reading from the N-terminus, the 132-residue chain is Small ribosomal subunit protein uS8 (132 aa).

The protein belongs to the universal ribosomal protein uS8 family. In terms of assembly, part of the 30S ribosomal subunit. Contacts proteins S5 and S12.

In terms of biological role, one of the primary rRNA binding proteins, it binds directly to 16S rRNA central domain where it helps coordinate assembly of the platform of the 30S subunit. This Azorhizobium caulinodans (strain ATCC 43989 / DSM 5975 / JCM 20966 / LMG 6465 / NBRC 14845 / NCIMB 13405 / ORS 571) protein is Small ribosomal subunit protein uS8.